A 362-amino-acid polypeptide reads, in one-letter code: UDP-N-acetylglucosamine--N-acetylmuramyl-(pentapeptide) pyrophosphoryl-undecaprenol N-acetylglucosamine transferase (362 aa).

Residues 14-16, Asn-126, Arg-166, Ser-193, and Gln-294 each bind UDP-N-acetyl-alpha-D-glucosamine; that span reads TGG.

It belongs to the glycosyltransferase 28 family. MurG subfamily.

The protein localises to the cell inner membrane. It catalyses the reaction di-trans,octa-cis-undecaprenyl diphospho-N-acetyl-alpha-D-muramoyl-L-alanyl-D-glutamyl-meso-2,6-diaminopimeloyl-D-alanyl-D-alanine + UDP-N-acetyl-alpha-D-glucosamine = di-trans,octa-cis-undecaprenyl diphospho-[N-acetyl-alpha-D-glucosaminyl-(1-&gt;4)]-N-acetyl-alpha-D-muramoyl-L-alanyl-D-glutamyl-meso-2,6-diaminopimeloyl-D-alanyl-D-alanine + UDP + H(+). Its pathway is cell wall biogenesis; peptidoglycan biosynthesis. In terms of biological role, cell wall formation. Catalyzes the transfer of a GlcNAc subunit on undecaprenyl-pyrophosphoryl-MurNAc-pentapeptide (lipid intermediate I) to form undecaprenyl-pyrophosphoryl-MurNAc-(pentapeptide)GlcNAc (lipid intermediate II). This is UDP-N-acetylglucosamine--N-acetylmuramyl-(pentapeptide) pyrophosphoryl-undecaprenol N-acetylglucosamine transferase from Paracoccus denitrificans (strain Pd 1222).